A 156-amino-acid chain; its full sequence is ATP synthase subunit b 2 (156 aa).

The helical transmembrane segment at 7-29 (LLGQAISFAIFVWFCMKYVWPPV) threads the bilayer.

The protein belongs to the ATPase B chain family. In terms of assembly, F-type ATPases have 2 components, F(1) - the catalytic core - and F(0) - the membrane proton channel. F(1) has five subunits: alpha(3), beta(3), gamma(1), delta(1), epsilon(1). F(0) has three main subunits: a(1), b(2) and c(10-14). The alpha and beta chains form an alternating ring which encloses part of the gamma chain. F(1) is attached to F(0) by a central stalk formed by the gamma and epsilon chains, while a peripheral stalk is formed by the delta and b chains.

The protein resides in the cell inner membrane. F(1)F(0) ATP synthase produces ATP from ADP in the presence of a proton or sodium gradient. F-type ATPases consist of two structural domains, F(1) containing the extramembraneous catalytic core and F(0) containing the membrane proton channel, linked together by a central stalk and a peripheral stalk. During catalysis, ATP synthesis in the catalytic domain of F(1) is coupled via a rotary mechanism of the central stalk subunits to proton translocation. In terms of biological role, component of the F(0) channel, it forms part of the peripheral stalk, linking F(1) to F(0). This chain is ATP synthase subunit b 2, found in Marinomonas sp. (strain MWYL1).